A 253-amino-acid polypeptide reads, in one-letter code: uncharacterized protein (253 aa).

The first 19 residues, 1–19 (MRYLKKVTIYISLLILVSG), serve as a signal peptide directing secretion. Cys-20 carries N-palmitoyl cysteine lipidation. Residue Cys-20 is the site of S-diacylglycerol cysteine attachment.

Belongs to the staphylococcal tandem lipoprotein family.

The protein localises to the cell membrane. This is an uncharacterized protein from Staphylococcus epidermidis (strain ATCC 35984 / DSM 28319 / BCRC 17069 / CCUG 31568 / BM 3577 / RP62A).